Here is a 1024-residue protein sequence, read N- to C-terminus: Gamma-tubulin complex component 5 (1024 aa).

Disordered stretches follow at residues 153-203, 523-545, and 853-873; these read IGLG…GGPQ, NEDK…SSRQ, and SQAK…GPPK. Basic and acidic residues predominate over residues 189-198; it reads TPLEEQDHNR. Positions 529-543 are enriched in low complexity; that stretch reads DSASASSGSDQGPSS. Basic and acidic residues predominate over residues 853–864; the sequence is SQAKEDIPRDQD.

This sequence belongs to the TUBGCP family. In terms of assembly, component of the gamma-tubulin ring complex (gTuRC) consisting of TUBGCP2, TUBGCP3, TUBGCP4, TUBGCP5 and TUBGCP6 and gamma-tubulin TUBG1 or TUBG2. TUBGCP2, TUBGCP3, TUBGCP4, TUBGCP5 and TUBGCP6 assemble in a 5:5:2:1:1 stoichiometry; each is associated with a gamma-tubulin, thereby arranging 14 gamma-tubulins in a helical manner. Gamma-tubulin at the first position is blocked by TUBGCP3 at the last position, allowing 13 protafilaments to grow into a microtubule. The gTuRC (via TUBGCP3 and TUBGCP6) interacts with ACTB and MZT1; the interactions form a luminal bridge that stabilizes the initial structure during complex assembly. The gTuRC (via TUBGCP2) interacts with MZT2A/MZT2B and CDK5RAP2 (via CM1 motif); the interactions play a role in gTuRC activation.

It is found in the cytoplasm. Its subcellular location is the cytoskeleton. It localises to the microtubule organizing center. The protein resides in the centrosome. Functionally, component of the gamma-tubulin ring complex (gTuRC) which mediates microtubule nucleation. The gTuRC regulates the minus-end nucleation of alpha-beta tubulin heterodimers that grow into microtubule protafilaments, a critical step in centrosome duplication and spindle formation. This is Gamma-tubulin complex component 5 (Tubgcp5) from Mus musculus (Mouse).